The sequence spans 55 residues: Large ribosomal subunit protein bL33 (55 aa).

The protein belongs to the bacterial ribosomal protein bL33 family.

The protein is Large ribosomal subunit protein bL33 of Burkholderia cenocepacia (strain ATCC BAA-245 / DSM 16553 / LMG 16656 / NCTC 13227 / J2315 / CF5610) (Burkholderia cepacia (strain J2315)).